The chain runs to 374 residues: Ribosomal RNA large subunit methyltransferase G (374 aa).

The protein belongs to the methyltransferase superfamily. RlmG family.

The protein localises to the cytoplasm. It catalyses the reaction guanosine(1835) in 23S rRNA + S-adenosyl-L-methionine = N(2)-methylguanosine(1835) in 23S rRNA + S-adenosyl-L-homocysteine + H(+). Its function is as follows. Specifically methylates the guanine in position 1835 (m2G1835) of 23S rRNA. This Ectopseudomonas mendocina (strain ymp) (Pseudomonas mendocina) protein is Ribosomal RNA large subunit methyltransferase G.